Consider the following 290-residue polypeptide: Protoheme IX farnesyltransferase 1 (290 aa).

A run of 8 helical transmembrane segments spans residues 8–28 (ITKPGIIFGNLISVAAGFFLA), 36–56 (FLLLLTTLVGVGLVIASGCVV), 85–105 (AAFVYALVLLLNGTALLFQVV), 108–128 (LSAVVVLLGYVFYVFFYTMWY), 131–151 (NSVYGTLVGSISGAVPPLVGY), 152–172 (LAVTNYISLEATLLFVMFCLW), 211–231 (AYVVAFGVVAIGLFMLGEAGY), and 269–289 (LLVVMGISGVLGLELIPLPFI).

It belongs to the UbiA prenyltransferase family. Protoheme IX farnesyltransferase subfamily.

It is found in the cell inner membrane. It carries out the reaction heme b + (2E,6E)-farnesyl diphosphate + H2O = Fe(II)-heme o + diphosphate. It participates in porphyrin-containing compound metabolism; heme O biosynthesis; heme O from protoheme: step 1/1. Its function is as follows. Converts heme B (protoheme IX) to heme O by substitution of the vinyl group on carbon 2 of heme B porphyrin ring with a hydroxyethyl farnesyl side group. The polypeptide is Protoheme IX farnesyltransferase 1 (Vibrio campbellii (strain ATCC BAA-1116)).